The sequence spans 260 residues: Opacity protein opA58 (260 aa).

The first 23 residues, 1–23 (MNPAPKKPSLLFSSLLFSSAAQA), serve as a signal peptide directing secretion.

Belongs to the opacity porin family.

The protein localises to the cell outer membrane. In terms of biological role, implicated in a number of adherence functions. OPA proteins are implicated in pathogenesis and are subject to phase variation. The protein is Opacity protein opA58 (opaJ) of Neisseria gonorrhoeae.